A 300-amino-acid polypeptide reads, in one-letter code: Porphobilinogen deaminase (300 aa).

Position 239 is an S-(dipyrrolylmethanemethyl)cysteine (C239).

The protein belongs to the HMBS family. In terms of assembly, monomer. Requires dipyrromethane as cofactor.

The enzyme catalyses 4 porphobilinogen + H2O = hydroxymethylbilane + 4 NH4(+). The protein operates within porphyrin-containing compound metabolism; protoporphyrin-IX biosynthesis; coproporphyrinogen-III from 5-aminolevulinate: step 2/4. Its function is as follows. Tetrapolymerization of the monopyrrole PBG into the hydroxymethylbilane pre-uroporphyrinogen in several discrete steps. In Francisella tularensis subsp. tularensis (strain FSC 198), this protein is Porphobilinogen deaminase.